We begin with the raw amino-acid sequence, 354 residues long: Magnesium-protoporphyrin IX monomethyl ester [oxidative] cyclase (354 aa).

Belongs to the AcsF family. The cofactor is Fe cation.

It is found in the plastid. It localises to the chloroplast. It catalyses the reaction Mg-protoporphyrin IX 13-monomethyl ester + 3 NADPH + 3 O2 + 2 H(+) = 3,8-divinyl protochlorophyllide a + 3 NADP(+) + 5 H2O. It participates in porphyrin-containing compound metabolism; chlorophyll biosynthesis (light-independent). Functionally, catalyzes the formation of the isocyclic ring in chlorophyll biosynthesis. Mediates the cyclase reaction, which results in the formation of divinylprotochlorophyllide (Pchlide) characteristic of all chlorophylls from magnesium-protoporphyrin IX 13-monomethyl ester (MgPMME). This Cyanidium caldarium (Red alga) protein is Magnesium-protoporphyrin IX monomethyl ester [oxidative] cyclase.